A 209-amino-acid polypeptide reads, in one-letter code: Small ribosomal subunit protein mS23 (209 aa).

It belongs to the mitochondrion-specific ribosomal protein mS23 family. As to quaternary structure, component of the mitochondrial small ribosomal subunit.

It is found in the mitochondrion. In Sclerotinia sclerotiorum (strain ATCC 18683 / 1980 / Ss-1) (White mold), this protein is Small ribosomal subunit protein mS23 (rsm25).